Consider the following 294-residue polypeptide: Lycopene elongase/hydratase (294 aa).

A run of 8 helical transmembrane segments spans residues 31–51 (FWLY…DGPG), 53–73 (LFSP…NVFL), 115–135 (LALL…LAWM), 160–180 (GLYI…APPA), 182–202 (AVVG…IPDI), 222–242 (TYYY…FTHW), 243–263 (VFGV…GVGV), and 274–294 (AINT…MLYG).

This sequence belongs to the UbiA prenyltransferase family.

It is found in the cell membrane. It carries out the reaction all-trans-lycopene + dimethylallyl diphosphate + H2O = dihydroisopentenyldehydrorhodopin + diphosphate. The catalysed reaction is isopentenyldehydrorhodopin + dimethylallyl diphosphate + H2O = dihydrobisanhydrobacterioruberin + diphosphate. It functions in the pathway carotenoid biosynthesis. Its function is as follows. Involved in the biosynthesis of the acyclic C50 carotenoid bacterioruberin (BR). Acts as a bifunctional elongase/hydratase that catalyzes the elongation of lycopene by attaching a C(5) isoprene unit at C-2, as well as the hydroxylation of the previous end of the molecule. The enzyme acts at both ends of the substrate, and catalyzes the conversion of lycopene to the C(45) intermediate dihydroisopentenyldehydrorhodopin (DH-IDR) and the conversion of isopentenyldehydrorhodopin (IDR) to the C(50) carotenoid dihydrobisanhydrobacterioruberin (DH-BABR). Can also catalyze the conversion of lycopene to tetrahydrobisanhydrobacterioruberin (TH-BABR). This is Lycopene elongase/hydratase from Haloarcula japonica (strain ATCC 49778 / DSM 6131 / JCM 7785 / NBRC 101032 / NCIMB 13157 / TR-1).